A 156-amino-acid chain; its full sequence is Peptidyl-prolyl cis-trans isomerase H (156 aa).

The PPIase cyclophilin-type domain occupies 1–155; sequence TPAGRLKCEL…MAVRITQCGE (155 aa).

The protein belongs to the cyclophilin-type PPIase family. PPIase H subfamily.

Its subcellular location is the nucleus. The enzyme catalyses [protein]-peptidylproline (omega=180) = [protein]-peptidylproline (omega=0). PPIases accelerate the folding of proteins. It catalyzes the cis-trans isomerization of proline imidic peptide bonds in oligopeptides. This Mycosarcoma maydis (Corn smut fungus) protein is Peptidyl-prolyl cis-trans isomerase H (CYP3).